We begin with the raw amino-acid sequence, 391 residues long: Elongation factor Tu (391 aa).

The region spanning 10 to 201 is the tr-type G domain; that stretch reads KPHVNIGTIG…EVDNYIPTPE (192 aa). The tract at residues 19 to 26 is G1; that stretch reads GHVDHGKT. Position 19-26 (19-26) interacts with GTP; the sequence is GHVDHGKT. T26 serves as a coordination point for Mg(2+). A G2 region spans residues 55–59; that stretch reads GITIS. A G3 region spans residues 76–79; it reads DCPG. Residues 76–80 and 131–134 each bind GTP; these read DCPGH and NKVD. A G4 region spans residues 131-134; that stretch reads NKVD. The interval 169–171 is G5; the sequence is SAL.

It belongs to the TRAFAC class translation factor GTPase superfamily. Classic translation factor GTPase family. EF-Tu/EF-1A subfamily. As to quaternary structure, monomer.

It is found in the cytoplasm. The enzyme catalyses GTP + H2O = GDP + phosphate + H(+). GTP hydrolase that promotes the GTP-dependent binding of aminoacyl-tRNA to the A-site of ribosomes during protein biosynthesis. The chain is Elongation factor Tu from Bartonella henselae (strain ATCC 49882 / DSM 28221 / CCUG 30454 / Houston 1) (Rochalimaea henselae).